The following is a 591-amino-acid chain: MNQGKIITVSGPLVVASGMQEANIQDICRVGHLGLVGEIIEMRRDQASIQVYEETSGIGPGEPVVTTGCPLSVELGPGLISEMFDGIQRPLDRFQKATDSDFLIRGVAIPSLDRKAKWAFIPKLSVGQEVVAGDILGTVQETAVIEHRIMVPYKVSGTLVAIHAGDFTVTDTVYEIKKEDGSIYQGSLMQTWPVRQSRPVAQKLIPVEPLVTGQRVIDTFFPVTKGGAAAVPGPFGAGKTVVQHQIAKFANVDIVIYVGCGERGNEMTDVLNEFPELIDPNTGQSIMERTVLIANTSNMPVAAREASIYTGITIAEYFRDMGYSVAIMADSTSRWAEALREMSGRLQEMPGDEGYPAYLGSRIAEYYERAGRVRTLGSQEREGTITAIGAVSPPGGDISEPVTQNTLRIVKVFWGLDAPLAQRRHFPAINWLTSYSLYQDDVGSYIDRKQQSNWSNKVTRAMAILQREASLEEIVRLVGLDSLSEQDRLTMAVARQIREDYLQQNAFDSVDTFTSFPKQEAMLTNILTFNEEASKALSLGAYFNEIMEGTAQVRDRIARSKFIPEENLEQIKGLTQKVTKEIHHVLAKGGI.

233–240 (GPFGAGKT) contacts ATP.

It belongs to the ATPase alpha/beta chains family.

The catalysed reaction is ATP + H2O + 4 H(+)(in) = ADP + phosphate + 5 H(+)(out). Produces ATP from ADP in the presence of a proton gradient across the membrane. The V-type alpha chain is a catalytic subunit. The polypeptide is V-type ATP synthase alpha chain (Streptococcus pyogenes serotype M28 (strain MGAS6180)).